Reading from the N-terminus, the 723-residue chain is Transient receptor potential cation channel subfamily V member 5 (723 aa).

The Cytoplasmic segment spans residues 1 to 320 (MGAKTPWIQL…SLKWKKYGQP (320 aa)). 6 ANK repeats span residues 38-68 (IWES…DFRQ), 72-101 (LGET…YLVT), 110-139 (VGQT…SASA), 156-185 (YGEH…DIRA), 189-222 (LGNT…GDHL), and 232-261 (QGLT…RIQW). The helical transmembrane segment at 321 to 341 (YFCLLGALYIFYMVCFTTCCV) threads the bilayer. Residues 342–378 (YRPLKFRDANRTHVRDNTIMEQKSLQEAYVTYQDKIR) lie on the Extracellular side of the membrane. The helical transmembrane segment at 379-401 (LVGELVTVIGAVIILLLEIPDIF) threads the bilayer. Residues 402–412 (RVGASRYFGQT) are Extracellular-facing. The chain crosses the membrane as a helical span at residues 413-435 (VLGGPFHVIIITYASLVLLTMAM). Topologically, residues 436–441 (RLTNVN) are cytoplasmic. A helical membrane pass occupies residues 442–462 (GEVVPMSMALVLGWCSVMYFA). Residues 463–485 (RGFQMLGPFTIMIQKMIFGDLLR) are Extracellular-facing. A helical transmembrane segment spans residues 486–506 (FCWLMAMVILGFASAFYIIFQ). Positions 517–537 (SDYPTAMFSTFELFLTIIDGP) form an intramembrane region, pore-forming. Residue aspartate 535 participates in Ca(2+) binding. The chain crosses the membrane as a helical span at residues 550-570 (VTYATFAIIATLLMLNLFIAM). At 571–723 (MGDTHWRVAQ…EGDGEEIYQF (153 aa)) the chain is on the cytoplasmic side. Positions 591–595 (VATTV) are interaction with S100A10. The tract at residues 643–646 (AFKS) is involved in Ca(2+)-dependent inactivation. The disordered stretch occupies residues 651 to 673 (EVQEQLSEKQPSGTETGTLARGS). Residues 654-667 (EQLSEKQPSGTETG) show a composition bias toward polar residues. Threonine 678 bears the Phosphothreonine mark. Phosphoserine is present on serine 682. Positions 693-723 (RGWEILRRNTLGHLNLGLDPGEGDGEEIYQF) are involved in Ca(2+)-dependent inactivation.

Belongs to the transient receptor (TC 1.A.4) family. TrpV subfamily. TRPV5 sub-subfamily. As to quaternary structure, homotetramer and probably heterotetramer with TRPV6. Interacts with TRPV6. Interacts with S100A10 and probably with the ANAX2-S100A10 heterotetramer. The interaction with S100A10 is required for the trafficking to the plasma membrane. Interacts with calmodulin. Interacts with BSPRY, which results in its inactivation. Glycosylated. As to expression, detected in kidney cortex (at protein level).

It localises to the apical cell membrane. The enzyme catalyses Ca(2+)(in) = Ca(2+)(out). Its activity is regulated as follows. Activated by WNK3. In terms of biological role, constitutively active calcium selective cation channel thought to be involved in Ca(2+) reabsorption in kidney and intestine. Required for normal Ca(2+) reabsorption in the kidney distal convoluted tubules. The channel is activated by low internal calcium level and the current exhibits an inward rectification. A Ca(2+)-dependent feedback regulation includes fast channel inactivation and slow current decay. Heteromeric assembly with TRPV6 seems to modify channel properties. TRPV5-TRPV6 heteromultimeric concatemers exhibit voltage-dependent gating. This chain is Transient receptor potential cation channel subfamily V member 5 (Trpv5), found in Mus musculus (Mouse).